The sequence spans 286 residues: MKMNPDDIRELRDRTGLGLSDCKKALEECDGDIKKAVDKLRTIGLAKADKKSDRVASDGLVAMCLTENCGVLIELNCETDFVARNEKFIELVLNLASIAHQERCTSVDELKNAKYESIGTVQEAIMNGTSVLGEKLELSKLCYLEAKDGVIAGYVHGDVCGLGKIGALIALQSPGDKAKLQEIGKQIAMHIVAMKPEALSIDDLDQMKLKNERSIIEEQVRSLNKPEEVAKKIVDGRMAKYYEEVVLLEQKFIKDDKMKVSDFIKSSEVSAVKLSNYKLLVLGGAN.

The tract at residues 79–82 is involved in Mg(2+) ion dislocation from EF-Tu; that stretch reads TDFV.

It belongs to the EF-Ts family.

The protein localises to the cytoplasm. Functionally, associates with the EF-Tu.GDP complex and induces the exchange of GDP to GTP. It remains bound to the aminoacyl-tRNA.EF-Tu.GTP complex up to the GTP hydrolysis stage on the ribosome. In Wolbachia sp. subsp. Drosophila simulans (strain wRi), this protein is Elongation factor Ts.